The following is a 115-amino-acid chain: Large ribosomal subunit protein P2 (115 aa).

M1 is subject to N-acetylmethionine. Phosphoserine occurs at positions 17 and 19. An N6-acetyllysine; alternate modification is found at K21. K21 bears the N6-succinyllysine; alternate mark. Positions 76 to 90 (APGSAAPAAGSAPAA) are enriched in low complexity. The tract at residues 76-115 (APGSAAPAAGSAPAAAEEKKEEKKEESEESDDDMGFGLFD) is disordered. Phosphoserine is present on residues S79 and S86. Residues 91-101 (AEEKKEEKKEE) are compositionally biased toward basic and acidic residues. Phosphoserine is present on residues S102 and S105.

The protein belongs to the eukaryotic ribosomal protein P1/P2 family. Heterodimer with RPLP1 at the lateral ribosomal stalk of the large ribosomal subunit.

Functionally, plays an important role in the elongation step of protein synthesis. The protein is Large ribosomal subunit protein P2 (RPLP2) of Bos taurus (Bovine).